Reading from the N-terminus, the 159-residue chain is RNA pyrophosphohydrolase (159 aa).

In terms of domain architecture, Nudix hydrolase spans Gly-6–Lys-149. Residues Gly-38–Gly-59 carry the Nudix box motif.

The protein belongs to the Nudix hydrolase family. RppH subfamily. A divalent metal cation serves as cofactor.

Its function is as follows. Accelerates the degradation of transcripts by removing pyrophosphate from the 5'-end of triphosphorylated RNA, leading to a more labile monophosphorylated state that can stimulate subsequent ribonuclease cleavage. This Pseudomonas fluorescens (strain ATCC BAA-477 / NRRL B-23932 / Pf-5) protein is RNA pyrophosphohydrolase.